The primary structure comprises 816 residues: Mitogen-activated protein kinase 7 (816 aa).

Residues 1 to 26 (MAEPLKEEDGEDGSAEPPGPVKAEPA) are disordered. N-acetylalanine is present on Ala-2. Positions 2 to 77 (AEPLKEEDGE…VVSSARRRLT (76 aa)) are required for cytoplasmic targeting. One can recognise a Protein kinase domain in the interval 55-347 (YEIIETIGNG…AAAALRHPFL (293 aa)). ATP contacts are provided by residues 61 to 69 (IGNGAYGVV) and Lys-84. The interval 78-139 (GQQVAIKKIP…FKSVYVVLDL (62 aa)) is required for binding to MAP2K5. The necessary for oligomerization stretch occupies residues 140–406 (MESDLHQIIH…QQIRFQPSLQ (267 aa)). Asp-182 functions as the Proton acceptor in the catalytic mechanism. A TXY motif is present at residues 219-221 (TEY). Residues 406-737 (QPVASEPGCP…PVFSGTPKGS (332 aa)) are disordered. The segment at 407–806 (PVASEPGCPD…REIQMDSPML (400 aa)) is may not be required for kinase activity; required to stimulate MEF2C activity. 2 stretches are compositionally biased toward pro residues: residues 433-445 (SPPP…PGPA) and 454-463 (QPPPPVSEPA). The span at 476–486 (KAALKAALLKS) shows a compositional bias: low complexity. 3 stretches are compositionally biased toward basic and acidic residues: residues 502–519 (PEPR…EREE), 527–544 (RAKE…KERG), and 563–573 (DNDRSLLERWT). The Nuclear localization signal motif lies at 505–539 (RKPVTAQERQREREEKRRRRQERAKEREKRRQERE). The span at 578-587 (PAAPALTSVP) shows a compositional bias: low complexity. Pro residues-rich tracts occupy residues 588–610 (APAP…PGPV) and 628–655 (VPQP…PAPP). Over residues 676–685 (PGSSTPGVLP) the composition is skewed to low complexity. Pro residues predominate over residues 686–695 (YFPPGLPPPD). The segment covering 701–720 (QSSMSESPDVNLVTQQLSKS) has biased composition (polar residues). Ser-720 is modified (phosphoserine). At Thr-733 the chain carries Phosphothreonine.

This sequence belongs to the protein kinase superfamily. CMGC Ser/Thr protein kinase family. MAP kinase subfamily. Interacts with MAP2K5. Forms oligomers. Interacts with MEF2A, MEF2C and MEF2D; the interaction phosphorylates the MEF2s and enhances transcriptional activity of MEF2A, MEF2C but not MEF2D. Interacts with SGK1. Preferentially interacts with PML isoform PML-4 but shows interaction also with its other isoforms: isoform PML-1, isoform PML-2, isoform PML-3 and isoform PML-6. Interacts (via N-terminal half) with HSP90AB1-CDC37 chaperone complex in resting cells; the interaction is MAP2K5-independent and prevents MAPK7 from ubiquitination and proteasomal degradation. Interacts with STUB1/CHIP; the interaction is enhanced in the presence of IGF1 or MAP2K5 and promotes STUB1/CHIP E3 ligase activity. Mg(2+) serves as cofactor. Dually phosphorylated on Thr-219 and Tyr-221, which activates the enzyme. Autophosphorylated in vitro on threonine and tyrosine residues when the C-terminal part of the kinase, which could have a regulatory role, is absent. In terms of tissue distribution, expressed in many adult tissues. Abundant in heart, placenta, lung, kidney and skeletal muscle. Not detectable in liver.

The protein localises to the cytoplasm. It is found in the nucleus. Its subcellular location is the PML body. The catalysed reaction is L-seryl-[protein] + ATP = O-phospho-L-seryl-[protein] + ADP + H(+). It catalyses the reaction L-threonyl-[protein] + ATP = O-phospho-L-threonyl-[protein] + ADP + H(+). With respect to regulation, activated by tyrosine and threonine phosphorylation. Activated in response to hyperosmolarity, hydrogen peroxide, and epidermal growth factor (EGF). Plays a role in various cellular processes such as proliferation, differentiation and cell survival. The upstream activator of MAPK7 is the MAPK kinase MAP2K5. Upon activation, it translocates to the nucleus and phosphorylates various downstream targets including MEF2C. EGF activates MAPK7 through a Ras-independent and MAP2K5-dependent pathway. As part of the MAPK/ERK signaling pathway, acts as a negative regulator of apoptosis in cardiomyocytes via interaction with STUB1/CHIP and promotion of STUB1-mediated ubiquitination and degradation of ICER-type isoforms of CREM. May have a role in muscle cell differentiation. May be important for endothelial function and maintenance of blood vessel integrity. MAP2K5 and MAPK7 interact specifically with one another and not with MEK1/ERK1 or MEK2/ERK2 pathways. Phosphorylates SGK1 at Ser-78 and this is required for growth factor-induced cell cycle progression. Involved in the regulation of p53/TP53 by disrupting the PML-MDM2 interaction. The polypeptide is Mitogen-activated protein kinase 7 (MAPK7) (Homo sapiens (Human)).